A 156-amino-acid chain; its full sequence is 16 kDa phloem protein 1 (156 aa).

In terms of domain architecture, C2 spans 1 to 108; the sequence is MAVGILEVSL…LEMGVEKGTA (108 aa). Positions 20, 26, 78, 80, 83, and 86 each coordinate Ca(2+).

Ca(2+) is required as a cofactor.

In terms of biological role, binds to both sense and antisense RNA. Can also bind sheared DNA and dodecamer DNA with a low affinity. Interacts with mesophyll plasmodesmata to mediate its own cell-to-cell transport and potentiate RNA trafficking. May play a role in plant defense signaling. The chain is 16 kDa phloem protein 1 from Arabidopsis thaliana (Mouse-ear cress).